The primary structure comprises 735 residues: ATP-dependent RNA helicase dbp4 (735 aa).

Residues 1 to 24 (MPKNRTGRSREAREKKRKEEEEEI) form a disordered region. The segment covering 8 to 19 (RSREAREKKRKE) has biased composition (basic and acidic residues). The Q motif motif lies at 39 to 67 (DHFAELPLTQPTKSALKNAHFITLTEIQK). The region spanning 70 to 244 (IPSALKGRDI…RLSLQNPDFI (175 aa)) is the Helicase ATP-binding domain. 83-90 (AKTGSGKT) contributes to the ATP binding site. Positions 192–195 (DEAD) match the DEAD box motif. The Helicase C-terminal domain maps to 270–424 (KLDILFGFIR…GKKTSIRNQL (155 aa)). The segment at 483 to 513 (GKLKNHSQSQKDYNSSTSLDSSEESEVDVEN) is disordered. A phosphoserine mark is found at serine 500, serine 503, serine 504, and serine 545. The disordered stretch occupies residues 652 to 712 (KQLEKKRRRQ…DNDERDHGGI (61 aa)). The span at 692–711 (ETSKKQKKWFEDNDERDHGG) shows a compositional bias: basic and acidic residues.

This sequence belongs to the DEAD box helicase family. DDX10/DBP4 subfamily. As to quaternary structure, interacts with the U3 and U14 snoRNAs. Associates with pre-ribosomal complexes.

The protein localises to the nucleus. The protein resides in the nucleolus. It catalyses the reaction ATP + H2O = ADP + phosphate + H(+). Functionally, ATP-dependent RNA helicase required for ribosome biogenesis. Involved in the release of U14 snoRNA in pre-ribosomal complexes. Required for pre-rRNA cleavage at site A2. This is ATP-dependent RNA helicase dbp4 (dbp4) from Schizosaccharomyces pombe (strain 972 / ATCC 24843) (Fission yeast).